The chain runs to 705 residues: Tetratricopeptide repeat protein 12 (705 aa).

The residue at position 71 (threonine 71) is a Phosphothreonine. 3 TPR repeats span residues 106-139, 140-173, and 174-207; these read ADAL…LKDM, KVLY…DEKC, and TKAY…NPKL.

In terms of tissue distribution, expressed in testis and in epithelial cells of trachea and bronchial tube.

The protein localises to the cytoplasm. Cytoplasmic protein that plays a role in the proper assembly of dynein arm complexes in motile cilia in both respiratory cells and sperm flagella. This Homo sapiens (Human) protein is Tetratricopeptide repeat protein 12 (TTC12).